The sequence spans 238 residues: Large ribosomal subunit protein uL5c (238 aa).

It belongs to the universal ribosomal protein uL5 family. Part of the 50S ribosomal subunit; contacts the 5S rRNA.

The protein resides in the plastid. It is found in the chloroplast. Binds 5S rRNA, forms part of the central protuberance of the 50S subunit. This Thalassiosira pseudonana (Marine diatom) protein is Large ribosomal subunit protein uL5c (rpl5).